A 172-amino-acid polypeptide reads, in one-letter code: uncharacterized protein (172 aa).

Residues 3–171 (KKVAIILTNE…FNREIVNQLN (169 aa)) form the PfpI endopeptidase domain.

The protein belongs to the peptidase C56 family.

This is an uncharacterized protein from Staphylococcus saprophyticus subsp. saprophyticus (strain ATCC 15305 / DSM 20229 / NCIMB 8711 / NCTC 7292 / S-41).